Reading from the N-terminus, the 265-residue chain is Glutamate racemase (265 aa).

Residues 13–14 (DS) and 45–46 (YG) each bind substrate. The Proton donor/acceptor role is filled by cysteine 77. 78–79 (NT) is a substrate binding site. The active-site Proton donor/acceptor is cysteine 185. A substrate-binding site is contributed by 186-187 (TH).

It belongs to the aspartate/glutamate racemases family.

The enzyme catalyses L-glutamate = D-glutamate. It functions in the pathway cell wall biogenesis; peptidoglycan biosynthesis. Its function is as follows. Provides the (R)-glutamate required for cell wall biosynthesis. This chain is Glutamate racemase, found in Vibrio cholerae serotype O1 (strain ATCC 39315 / El Tor Inaba N16961).